A 348-amino-acid chain; its full sequence is Anthranilate phosphoribosyltransferase (348 aa).

Residues Gly84, 87–88 (GD), Thr92, 94–97 (NITT), 112–120 (KHGNRSVSS), and Ser124 each bind 5-phospho-alpha-D-ribose 1-diphosphate. Residue Gly84 participates in anthranilate binding. Position 96 (Thr96) interacts with Mg(2+). Asn115 lines the anthranilate pocket. Arg170 is a binding site for anthranilate. The Mg(2+) site is built by Asp228 and Glu229.

Belongs to the anthranilate phosphoribosyltransferase family. As to quaternary structure, homodimer. The cofactor is Mg(2+).

It catalyses the reaction N-(5-phospho-beta-D-ribosyl)anthranilate + diphosphate = 5-phospho-alpha-D-ribose 1-diphosphate + anthranilate. It participates in amino-acid biosynthesis; L-tryptophan biosynthesis; L-tryptophan from chorismate: step 2/5. Functionally, catalyzes the transfer of the phosphoribosyl group of 5-phosphorylribose-1-pyrophosphate (PRPP) to anthranilate to yield N-(5'-phosphoribosyl)-anthranilate (PRA). The chain is Anthranilate phosphoribosyltransferase from Corynebacterium glutamicum (strain R).